The chain runs to 185 residues: Large ribosomal subunit protein uL16m (185 aa).

Belongs to the universal ribosomal protein uL16 family.

It is found in the mitochondrion. This chain is Large ribosomal subunit protein uL16m (RPL16), found in Zea mays (Maize).